The sequence spans 636 residues: Epithelial sodium channel subunit alpha (636 aa).

Residues methionine 1–alanine 28 form a disordered region. Topologically, residues methionine 1 to threonine 77 are cytoplasmic. Residues alanine 78–isoleucine 98 traverse the membrane as a helical segment. At tyrosine 99–serine 549 the chain is on the extracellular side. Disulfide bonds link cysteine 126–cysteine 293, cysteine 218–cysteine 225, cysteine 270–cysteine 277, cysteine 381–cysteine 466, cysteine 403–cysteine 443, cysteine 403–cysteine 462, cysteine 407–cysteine 458, cysteine 416–cysteine 443, cysteine 416–cysteine 466, and cysteine 418–cysteine 432. Residues valine 550–leucine 570 form a helical membrane-spanning segment. At alanine 571–glutamate 636 the chain is on the cytoplasmic side.

It belongs to the amiloride-sensitive sodium channel (TC 1.A.6) family. SCNN1A subfamily. In terms of assembly, heterotrimer; containing an alpha/SCNN1A, a beta/SCNN1B and a gamma/SCNN1G subunit.

It is found in the apical cell membrane. The protein resides in the cell projection. The protein localises to the cilium. It localises to the cytoplasmic granule. Its subcellular location is the cytoplasm. It is found in the cytoplasmic vesicle. The protein resides in the secretory vesicle. The protein localises to the acrosome. It localises to the flagellum. It carries out the reaction Na(+)(in) = Na(+)(out). Its activity is regulated as follows. Originally identified and characterized by its inhibition by the diuretic drug amiloride. Functionally, this is one of the three pore-forming subunits of the heterotrimeric epithelial sodium channel (ENaC), a critical regulator of sodium balance and fluid homeostasis. ENaC operates in epithelial tissues, where it mediates the electrodiffusion of sodium ions from extracellular fluid through the apical membrane of cells, with water following osmotically. The polypeptide is Epithelial sodium channel subunit alpha (Anolis carolinensis (Green anole)).